Reading from the N-terminus, the 141-residue chain is Sec-independent protein translocase protein TatB (141 aa).

The helical transmembrane segment at 2-22 threads the bilayer; sequence FANVGWGEMLVLVIAGLVILG. Residues 92–141 form a disordered region; sequence IFTGRFDSTSSDQPGSGKPPKPQSGPGPAAASGPAATTTPASTPFDPDAT. The span at 117–141 shows a compositional bias: low complexity; sequence PGPAAASGPAATTTPASTPFDPDAT.

This sequence belongs to the TatB family. As to quaternary structure, the Tat system comprises two distinct complexes: a TatABC complex, containing multiple copies of TatA, TatB and TatC subunits, and a separate TatA complex, containing only TatA subunits. Substrates initially bind to the TatABC complex, which probably triggers association of the separate TatA complex to form the active translocon.

It localises to the cell membrane. In terms of biological role, part of the twin-arginine translocation (Tat) system that transports large folded proteins containing a characteristic twin-arginine motif in their signal peptide across membranes. Together with TatC, TatB is part of a receptor directly interacting with Tat signal peptides. TatB may form an oligomeric binding site that transiently accommodates folded Tat precursor proteins before their translocation. The polypeptide is Sec-independent protein translocase protein TatB (Mycolicibacterium gilvum (strain PYR-GCK) (Mycobacterium gilvum (strain PYR-GCK))).